The chain runs to 246 residues: CTD nuclear envelope phosphatase 1 homolog (246 aa).

The chain crosses the membrane as a helical span at residues 3-23 (TIAQSVFCFLAGFFNFFLLYF). The FCP1 homology domain maps to 53 to 220 (LTVKRKILVL…LNLLPFLDAL (168 aa)).

The protein belongs to the dullard family.

Its subcellular location is the membrane. It is found in the nucleus envelope. The catalysed reaction is O-phospho-L-seryl-[protein] + H2O = L-seryl-[protein] + phosphate. It catalyses the reaction O-phospho-L-threonyl-[protein] + H2O = L-threonyl-[protein] + phosphate. Serine/threonine protein phosphatase that may dephosphorylate and activate lipin-like phosphatases. Lipins are phosphatidate phosphatases that catalyze the conversion of phosphatidic acid to diacylglycerol and control the metabolism of fatty acids at different levels. May indirectly modulate the lipid composition of nuclear and/or endoplasmic reticulum membranes and be required for proper nuclear membrane morphology and/or dynamics. Contributes to closure of nuclear envelope (NE) holes and prevents excess nuclear membranes after meiosis and mitosis, possibly through spatial regulation of lipin. May limit the production of endoplasmic reticulum (ER) sheets proximal to the NE to prevent the ER membranes that feed into NE openings from invading the nuclear interior and thereby restrict nuclear transport to nuclear pore complexes (NPCs). May also indirectly regulate the production of lipid droplets and triacylglycerol. The protein is CTD nuclear envelope phosphatase 1 homolog (cnep-1) of Caenorhabditis elegans.